A 244-amino-acid polypeptide reads, in one-letter code: Phosphoadenosine 5'-phosphosulfate reductase (244 aa).

C239 (nucleophile; cysteine thiosulfonate intermediate) is an active-site residue.

This sequence belongs to the PAPS reductase family. CysH subfamily.

The protein localises to the cytoplasm. The enzyme catalyses [thioredoxin]-disulfide + sulfite + adenosine 3',5'-bisphosphate + 2 H(+) = [thioredoxin]-dithiol + 3'-phosphoadenylyl sulfate. It functions in the pathway sulfur metabolism; hydrogen sulfide biosynthesis; sulfite from sulfate: step 3/3. Functionally, catalyzes the formation of sulfite from phosphoadenosine 5'-phosphosulfate (PAPS) using thioredoxin as an electron donor. The chain is Phosphoadenosine 5'-phosphosulfate reductase from Salmonella schwarzengrund (strain CVM19633).